The following is a 447-amino-acid chain: uncharacterized protein (447 aa).

[4Fe-4S] cluster contacts are provided by Cys-87, Cys-93, Cys-96, and Cys-162. Gln-284, Tyr-313, Glu-334, and Asp-375 together coordinate S-adenosyl-L-methionine. The active-site Nucleophile is Cys-402.

This sequence belongs to the class I-like SAM-binding methyltransferase superfamily. RNA M5U methyltransferase family.

This is an uncharacterized protein from Nanoarchaeum equitans (strain Kin4-M).